The primary structure comprises 344 residues: Methionine import ATP-binding protein MetN 1 (344 aa).

Positions 2–241 constitute an ABC transporter domain; that stretch reads IEIRNLSQRF…PHHEVTRALI (240 aa). 38-45 is an ATP binding site; sequence GRSGAGKS.

It belongs to the ABC transporter superfamily. Methionine importer (TC 3.A.1.24) family. The complex is composed of two ATP-binding proteins (MetN), two transmembrane proteins (MetI) and a solute-binding protein (MetQ).

Its subcellular location is the cell inner membrane. It carries out the reaction L-methionine(out) + ATP + H2O = L-methionine(in) + ADP + phosphate + H(+). It catalyses the reaction D-methionine(out) + ATP + H2O = D-methionine(in) + ADP + phosphate + H(+). In terms of biological role, part of the ABC transporter complex MetNIQ involved in methionine import. Responsible for energy coupling to the transport system. In Burkholderia mallei (strain ATCC 23344), this protein is Methionine import ATP-binding protein MetN 1.